We begin with the raw amino-acid sequence, 350 residues long: Uroporphyrinogen decarboxylase (350 aa).

Substrate is bound by residues 23–27 (RQAGR), D72, Y149, S204, and H318.

This sequence belongs to the uroporphyrinogen decarboxylase family. In terms of assembly, homodimer.

The protein resides in the cytoplasm. It carries out the reaction uroporphyrinogen III + 4 H(+) = coproporphyrinogen III + 4 CO2. Its pathway is porphyrin-containing compound metabolism; protoporphyrin-IX biosynthesis; coproporphyrinogen-III from 5-aminolevulinate: step 4/4. Its function is as follows. Catalyzes the decarboxylation of four acetate groups of uroporphyrinogen-III to yield coproporphyrinogen-III. The sequence is that of Uroporphyrinogen decarboxylase from Carboxydothermus hydrogenoformans (strain ATCC BAA-161 / DSM 6008 / Z-2901).